Consider the following 181-residue polypeptide: MRFKAELMNAPEMRRALYRIAHEIVEANKGTEGLALVGIHTRGIPLAHRIARFIAEFEGKEVPVGVLDITLYRDDLTEIGYRPQVRETRIPFDLTGKAIVLVDDVLYTGRTARAALDALIDLGRPRRIYLAVLVDRGHRELPIRADFVGKNVPTSRSEVVKVKVEEVDGEDRVELWEREGA.

Substrate contacts are provided by residues 41–42 (TR), R82, R86, 103–111 (DDVLYTGRT), R136, and V160. A PRPP-binding motif is present at residues 99–111 (IVLVDDVLYTGRT).

It belongs to the purine/pyrimidine phosphoribosyltransferase family. PyrR subfamily.

The enzyme catalyses UMP + diphosphate = 5-phospho-alpha-D-ribose 1-diphosphate + uracil. Functionally, probably regulates transcriptional attenuation of the pyrimidine nucleotide (pyr) operon in response to exogenous pyrimidines. In contrast to pyr attenuation in Bacillus, PyrR from Thermus could act as a translational repressor: the binding of PyrR at its proposed recognition site in the transcript would prevent initiation of translation of the leader peptide, resulting in terminator formation and reduced expression of downstream genes. Also displays uracil phosphoribosyltransferase activity. The polypeptide is Bifunctional protein PyrR (pyrR) (Thermus thermophilus (strain ATCC BAA-163 / DSM 7039 / HB27)).